The sequence spans 281 residues: 3-hydroxyanthranilate 3,4-dioxygenase (281 aa).

The domain A (catalytic) stretch occupies residues 1–162 (MAGVTAIEIP…SNEFKTGKPG (162 aa)). R45 is a binding site for O2. H49, E55, and H93 together coordinate Fe cation. E55 serves as a coordination point for substrate. Positions 97 and 107 each coordinate substrate. Positions 163-179 (KGTFACNAPYEARWTDL) are linker. The domain B stretch occupies residues 180–281 (PVPINRKEFI…GFAITIRMPG (102 aa)).

It belongs to the 3-HAO family. Requires Fe(2+) as cofactor.

The protein resides in the cytoplasm. It carries out the reaction 3-hydroxyanthranilate + O2 = (2Z,4Z)-2-amino-3-carboxymuconate 6-semialdehyde. It functions in the pathway cofactor biosynthesis; NAD(+) biosynthesis; quinolinate from L-kynurenine: step 3/3. Its function is as follows. Catalyzes the oxidative ring opening of 3-hydroxyanthranilate to 2-amino-3-carboxymuconate semialdehyde, which spontaneously cyclizes to quinolinate. This Caenorhabditis briggsae protein is 3-hydroxyanthranilate 3,4-dioxygenase (haao-1).